A 351-amino-acid chain; its full sequence is Tropomodulin-2 (351 aa).

At Ser-25 the chain carries Phosphoserine.

Belongs to the tropomodulin family. In terms of assembly, binds to the N-terminus of tropomyosin and to actin. Neuronal-tissue specific.

Its subcellular location is the cytoplasm. It localises to the cytoskeleton. In terms of biological role, blocks the elongation and depolymerization of the actin filaments at the pointed end. The Tmod/TM complex contributes to the formation of the short actin protofilament, which in turn defines the geometry of the membrane skeleton. This Homo sapiens (Human) protein is Tropomodulin-2 (TMOD2).